The sequence spans 215 residues: NAD(P)H-quinone oxidoreductase subunit I (215 aa).

4Fe-4S ferredoxin-type domains lie at 55–84 and 95–124; these read GRIHYEFDKCIACEVCVRVCPINLPVVDWV and RNYSIDFGVCIFCGNCVEYCPTNCLSMTEE. 8 residues coordinate [4Fe-4S] cluster: cysteine 64, cysteine 67, cysteine 70, cysteine 74, cysteine 104, cysteine 107, cysteine 110, and cysteine 114. Residues 166-215 form a disordered region; sequence AGEMDPHGVPNDRPRAGQLPSQVLETLAPPAKVGAKNEGQSTGTTQEGEA. The segment covering 169–180 has biased composition (basic and acidic residues); sequence MDPHGVPNDRPR. Over residues 203–215 the composition is skewed to polar residues; sequence EGQSTGTTQEGEA.

This sequence belongs to the complex I 23 kDa subunit family. NDH-1 is composed of at least 11 different subunits. It depends on [4Fe-4S] cluster as a cofactor.

Its subcellular location is the cellular thylakoid membrane. The catalysed reaction is a plastoquinone + NADH + (n+1) H(+)(in) = a plastoquinol + NAD(+) + n H(+)(out). It carries out the reaction a plastoquinone + NADPH + (n+1) H(+)(in) = a plastoquinol + NADP(+) + n H(+)(out). NDH-1 shuttles electrons from an unknown electron donor, via FMN and iron-sulfur (Fe-S) centers, to quinones in the respiratory and/or the photosynthetic chain. The immediate electron acceptor for the enzyme in this species is believed to be plastoquinone. Couples the redox reaction to proton translocation, and thus conserves the redox energy in a proton gradient. In Parasynechococcus marenigrum (strain WH8102), this protein is NAD(P)H-quinone oxidoreductase subunit I.